Reading from the N-terminus, the 242-residue chain is N-alpha-acetyltransferase 60 (242 aa).

Residues 1 to 192 (MTEVVPSSAL…GGHPPWTILD (192 aa)) lie on the Cytoplasmic side of the membrane. Residues 13-182 (VSLRLLCHDD…DGFTYVLYIN (170 aa)) enclose the N-acetyltransferase domain. Y38 contributes to the substrate binding site. At K79 the chain carries N6-acetyllysine; by autocatalysis. Residue Y97 is part of the active site. Substrate is bound at residue L99. 101 to 103 (LGV) is a binding site for acetyl-CoA. 3 positions are modified to N6-acetyllysine; by autocatalysis: K105, K109, and K121. 109–114 (KHGIGS) lines the acetyl-CoA pocket. H138 is a catalytic residue. Residues N143 and 150–153 (YENR) contribute to the acetyl-CoA site. K156 is subject to N6-acetyllysine; by autocatalysis. Residues 162–173 (PYYYSIRGVLKD) form a required for homodimerization region. Y165 provides a ligand contact to substrate. An intramembrane region (helical) is located at residues 193–236 (YIQHLGSALASLSPCSIPHRVYRQAHSLLCSFLPWSGISSKSGI). Topologically, residues 237–242 (EYSRTM) are cytoplasmic.

Belongs to the acetyltransferase family. NAA60 subfamily. As to quaternary structure, monomer and homodimer; monomer in presence of substrate and homodimer in its absence. In terms of processing, acetylated: autoacetylation is required for optimal acetyltransferase activity.

It localises to the golgi apparatus membrane. The enzyme catalyses N-terminal L-methionyl-[transmembrane protein] + acetyl-CoA = N-terminal N(alpha)-acetyl-L-methionyl-[transmembrane protein] + CoA + H(+). It catalyses the reaction L-lysyl-[protein] + acetyl-CoA = N(6)-acetyl-L-lysyl-[protein] + CoA + H(+). Functionally, N-alpha-acetyltransferase that specifically mediates the acetylation of N-terminal residues of the transmembrane proteins, with a strong preference for N-termini facing the cytosol. Displays N-terminal acetyltransferase activity towards a range of N-terminal sequences including those starting with Met-Lys, Met-Val, Met-Ala and Met-Met. Required for normal chromosomal segregation during anaphase. May also show histone acetyltransferase activity; such results are however unclear in vivo and would require additional experimental evidences. The sequence is that of N-alpha-acetyltransferase 60 from Homo sapiens (Human).